We begin with the raw amino-acid sequence, 143 residues long: Ribosome-binding factor A (143 aa).

The tract at residues 123-143 (DKSLQENYKQNDKETKAEKLR) is disordered.

The protein belongs to the RbfA family. As to quaternary structure, monomer. Binds 30S ribosomal subunits, but not 50S ribosomal subunits or 70S ribosomes.

Its subcellular location is the cytoplasm. One of several proteins that assist in the late maturation steps of the functional core of the 30S ribosomal subunit. Associates with free 30S ribosomal subunits (but not with 30S subunits that are part of 70S ribosomes or polysomes). Required for efficient processing of 16S rRNA. May interact with the 5'-terminal helix region of 16S rRNA. The polypeptide is Ribosome-binding factor A (Francisella tularensis subsp. mediasiatica (strain FSC147)).